A 154-amino-acid chain; its full sequence is Iron-sulfur cluster assembly 2 homolog, mitochondrial (154 aa).

The transit peptide at 1 to 8 directs the protein to the mitochondrion; it reads MAAARGLS. Residues Cys-79, Cys-144, and Cys-146 each contribute to the Fe cation site.

The protein belongs to the HesB/IscA family. As to quaternary structure, heterotetramer; forms a dimer of dimers with IBA57. Interacts with [2Fe-2S]-ISCA2 forming the heterodimer [2Fe- 2S]-ISCA2-IBA57 complex; [2Fe-2S] cluster binding is absolutely required to promote the complex formation.

Its subcellular location is the mitochondrion. In terms of biological role, involved in the maturation of mitochondrial 4Fe-4S proteins functioning late in the iron-sulfur cluster assembly pathway. May be involved in the binding of an intermediate of Fe/S cluster assembly. The polypeptide is Iron-sulfur cluster assembly 2 homolog, mitochondrial (ISCA2) (Pongo abelii (Sumatran orangutan)).